Here is a 421-residue protein sequence, read N- to C-terminus: Gamma-glutamyl phosphate reductase (421 aa).

Belongs to the gamma-glutamyl phosphate reductase family.

It is found in the cytoplasm. The catalysed reaction is L-glutamate 5-semialdehyde + phosphate + NADP(+) = L-glutamyl 5-phosphate + NADPH + H(+). It participates in amino-acid biosynthesis; L-proline biosynthesis; L-glutamate 5-semialdehyde from L-glutamate: step 2/2. Catalyzes the NADPH-dependent reduction of L-glutamate 5-phosphate into L-glutamate 5-semialdehyde and phosphate. The product spontaneously undergoes cyclization to form 1-pyrroline-5-carboxylate. The polypeptide is Gamma-glutamyl phosphate reductase (Acinetobacter baylyi (strain ATCC 33305 / BD413 / ADP1)).